The following is a 568-amino-acid chain: Pentatricopeptide repeat-containing protein At1g73400, mitochondrial (568 aa).

Residues 1–55 (MMRRLVSYFVRSRFSLHLSTTPPQRSALFSHILSSHLDSIQINKKISSFSVHRFC) constitute a mitochondrion transit peptide. 8 PPR repeats span residues 233–263 (EINA…MRHR), 267–301 (DANT…GHKP), 302–336 (ENFT…GSAV), 340–374 (TAKT…GCLP), 375–409 (DVST…GYPP), 410–444 (DIVT…RCAP), 445–479 (SVQT…DCVQ), and 480–514 (DVET…GLKL).

This sequence belongs to the PPR family. P subfamily.

Its subcellular location is the mitochondrion. This chain is Pentatricopeptide repeat-containing protein At1g73400, mitochondrial, found in Arabidopsis thaliana (Mouse-ear cress).